The following is a 534-amino-acid chain: Glycerophosphodiester transporter GIT2 (534 aa).

A run of 12 helical transmembrane segments spans residues 63–83, 96–116, 135–155, 163–183, 202–222, 230–250, 289–309, 322–342, 350–370, 377–397, 417–437, and 453–473; these read GAGL…MACL, AISN…LSFG, LIAF…QGFF, FCLG…ASEF, FMID…LWIF, LWRV…FIRL, MIWF…AIIL, WGWS…GAFS, LTLA…SACL, VAAF…GPGG, GIAA…FPAI, and VPFY…FFLC.

It belongs to the major facilitator superfamily. Sugar transporter (TC 2.A.1.1) family.

It localises to the cell membrane. In terms of biological role, probable glycerophosphodiester transporter. Does not possess detectable glycerophosphoinositol (GroPIns) transport activity. Might be involved in the uptake of glycerophosphocholine (GroPCho). The expanded ability to utilize GroPIns and GroPCho results from the organism's pathogenic nature and its need to occupy a variety of environments within its host organism. This possibility is buttressed by the fact that GroPIns and GroPCho are present and abundant in human fluids. In Candida albicans (strain SC5314 / ATCC MYA-2876) (Yeast), this protein is Glycerophosphodiester transporter GIT2.